The following is a 409-amino-acid chain: D-galactonate dehydratase family member Achl_0790 (409 aa).

Position 217 (Asp-217) interacts with Mg(2+). His-219 lines the D-arabinonate pocket. Residues Glu-243 and Glu-269 each coordinate Mg(2+). D-arabinonate is bound by residues Glu-269, Arg-290, His-319, and Glu-346.

Belongs to the mandelate racemase/muconate lactonizing enzyme family. GalD subfamily.

In terms of biological role, has no detectable activity with D-mannonate and with a panel of 70 other acid sugars (in vitro), in spite of the conservation of the residues that are expected to be important for catalytic activity and cofactor binding. May have evolved a divergent function. This is D-galactonate dehydratase family member Achl_0790 from Pseudarthrobacter chlorophenolicus (strain ATCC 700700 / DSM 12829 / CIP 107037 / JCM 12360 / KCTC 9906 / NCIMB 13794 / A6) (Arthrobacter chlorophenolicus).